The primary structure comprises 463 residues: Siroheme synthase (463 aa).

Residues 1-203 (MDYLPLFHKL…GQGAEAERLL (203 aa)) are precorrin-2 dehydrogenase /sirohydrochlorin ferrochelatase. Residues 22-23 (EI) and 43-44 (PD) contribute to the NAD(+) site. The residue at position 128 (S128) is a Phosphoserine. Residues 216 to 463 (GEVYLVGAGP…LAWFEGSQNS (248 aa)) are uroporphyrinogen-III C-methyltransferase. P225 is an S-adenosyl-L-methionine binding site. The Proton acceptor role is filled by D248. Residue K270 is the Proton donor of the active site. S-adenosyl-L-methionine is bound by residues 301 to 303 (GGD), I306, 331 to 332 (TA), M383, and G412.

It in the N-terminal section; belongs to the precorrin-2 dehydrogenase / sirohydrochlorin ferrochelatase family. The protein in the C-terminal section; belongs to the precorrin methyltransferase family.

It carries out the reaction uroporphyrinogen III + 2 S-adenosyl-L-methionine = precorrin-2 + 2 S-adenosyl-L-homocysteine + H(+). It catalyses the reaction precorrin-2 + NAD(+) = sirohydrochlorin + NADH + 2 H(+). The catalysed reaction is siroheme + 2 H(+) = sirohydrochlorin + Fe(2+). The protein operates within cofactor biosynthesis; adenosylcobalamin biosynthesis; precorrin-2 from uroporphyrinogen III: step 1/1. It participates in cofactor biosynthesis; adenosylcobalamin biosynthesis; sirohydrochlorin from precorrin-2: step 1/1. Its pathway is porphyrin-containing compound metabolism; siroheme biosynthesis; precorrin-2 from uroporphyrinogen III: step 1/1. It functions in the pathway porphyrin-containing compound metabolism; siroheme biosynthesis; siroheme from sirohydrochlorin: step 1/1. The protein operates within porphyrin-containing compound metabolism; siroheme biosynthesis; sirohydrochlorin from precorrin-2: step 1/1. Multifunctional enzyme that catalyzes the SAM-dependent methylations of uroporphyrinogen III at position C-2 and C-7 to form precorrin-2 via precorrin-1. Then it catalyzes the NAD-dependent ring dehydrogenation of precorrin-2 to yield sirohydrochlorin. Finally, it catalyzes the ferrochelation of sirohydrochlorin to yield siroheme. This chain is Siroheme synthase, found in Pseudomonas putida (strain ATCC 700007 / DSM 6899 / JCM 31910 / BCRC 17059 / LMG 24140 / F1).